Consider the following 317-residue polypeptide: Glucokinase (317 aa).

6-12 (GVDIGGT) lines the ATP pocket.

The protein belongs to the ROK (NagC/XylR) family. Homooligomer (possibly a homotetramer). Alternatively, it may form a heterotetramer of two glucokinase subunits with two ORF2 (AC P40182) proteins.

Its subcellular location is the cytoplasm. The enzyme catalyses D-glucose + ATP = D-glucose 6-phosphate + ADP + H(+). Its function is as follows. A probable glucose kinase. Required for glucose repression of many different genes, restores glucose kinase activity in E.coli glk mutants. This is Glucokinase (glkA) from Streptomyces coelicolor (strain ATCC BAA-471 / A3(2) / M145).